A 188-amino-acid chain; its full sequence is Probable manganese efflux pump MntP (188 aa).

The next 5 helical transmembrane spans lie at 3–23 (ITATVLLAFGMSMDAFAASIG), 66–86 (LEWNHWIAFVLLIFLGGRMII), 106–128 (WLLVTTAIATSLDAMAVGVGLAF), 143–163 (ATLIMSTLGMMVGRFIGSIIG), and 168–188 (ILGGLVLIGIGVQILWTHFHG).

Belongs to the MntP (TC 9.B.29) family.

It is found in the cell inner membrane. Its function is as follows. Probably functions as a manganese efflux pump. This chain is Probable manganese efflux pump MntP, found in Shigella flexneri serotype 5b (strain 8401).